We begin with the raw amino-acid sequence, 74 residues long: uncharacterized protein (74 aa).

The helical transmembrane segment at 52–72 (ITFGFTVLGLGIGMIFGDAGL) threads the bilayer.

It localises to the membrane. This is an uncharacterized protein from Methanocaldococcus jannaschii (strain ATCC 43067 / DSM 2661 / JAL-1 / JCM 10045 / NBRC 100440) (Methanococcus jannaschii).